Consider the following 86-residue polypeptide: Small ribosomal subunit protein uS17 (86 aa).

The protein belongs to the universal ribosomal protein uS17 family. Part of the 30S ribosomal subunit.

Functionally, one of the primary rRNA binding proteins, it binds specifically to the 5'-end of 16S ribosomal RNA. The chain is Small ribosomal subunit protein uS17 from Bifidobacterium longum (strain DJO10A).